The chain runs to 311 residues: Methionyl-tRNA formyltransferase (311 aa).

110–113 (SLLP) lines the (6S)-5,6,7,8-tetrahydrofolate pocket.

It belongs to the Fmt family.

The catalysed reaction is L-methionyl-tRNA(fMet) + (6R)-10-formyltetrahydrofolate = N-formyl-L-methionyl-tRNA(fMet) + (6S)-5,6,7,8-tetrahydrofolate + H(+). Its function is as follows. Attaches a formyl group to the free amino group of methionyl-tRNA(fMet). The formyl group appears to play a dual role in the initiator identity of N-formylmethionyl-tRNA by promoting its recognition by IF2 and preventing the misappropriation of this tRNA by the elongation apparatus. The protein is Methionyl-tRNA formyltransferase of Streptococcus pneumoniae (strain JJA).